The primary structure comprises 272 residues: MKRSAFFISDGTGITAETLGQSLLAQFENVTFSKFTRPYIDSMEKARAMVQQINIAAEKDGHRPIIFDTIVNQDIREILATSNGFMIDIFSTFLAPLEQELSEHSSYSVGKSHSIGHNSNYMERIEAVNFALDNDDGARTHYYDKADLILVGVSRCGKTPTCLYMAMQFGIRAANYPLTEEDMERLQLPNALRAHKHKLFGLTIDPDRLTAIRNERKPNSRYSSYAQCEFEVREVENLFRRENIPHINSTHFSVEEISAKILVEKGVERRFK.

Residue 152–159 (GVSRCGKT) participates in ADP binding.

Belongs to the pyruvate, phosphate/water dikinase regulatory protein family. PSRP subfamily.

It carries out the reaction [pyruvate, water dikinase] + ADP = [pyruvate, water dikinase]-phosphate + AMP + H(+). It catalyses the reaction [pyruvate, water dikinase]-phosphate + phosphate + H(+) = [pyruvate, water dikinase] + diphosphate. Functionally, bifunctional serine/threonine kinase and phosphorylase involved in the regulation of the phosphoenolpyruvate synthase (PEPS) by catalyzing its phosphorylation/dephosphorylation. The chain is Putative phosphoenolpyruvate synthase regulatory protein from Pseudomonas fluorescens (strain ATCC BAA-477 / NRRL B-23932 / Pf-5).